We begin with the raw amino-acid sequence, 136 residues long: ATP synthase F(0) complex subunit C1, mitochondrial (136 aa).

The N-terminal 61 residues, 1 to 61, are a transit peptide targeting the mitochondrion; that stretch reads MQTTGALLIS…REFQTSVVSR (61 aa). Residues 77–97 traverse the membrane as a helical segment; the sequence is VGVAGSGAGIGTVFGSLIIGY. Lys-104 bears the N6,N6,N6-trimethyllysine mark. Residues 112–132 form a helical membrane-spanning segment; the sequence is ILGFALFEAMGLFCLMVAFLI.

Belongs to the ATPase C chain family. Homooctamer; the c-ring consists of eight c subunits forming a circle, and each subunit adopts a hairpin shape. Component of the ATP synthase complex composed at least of ATP5F1A/subunit alpha, ATP5F1B/subunit beta, ATP5MC1/subunit c (homooctomer), MT-ATP6/subunit a, MT-ATP8/subunit 8, ATP5ME/subunit e, ATP5MF/subunit f, ATP5MG/subunit g, ATP5MK/subunit k, ATP5MJ/subunit j, ATP5F1C/subunit gamma, ATP5F1D/subunit delta, ATP5F1E/subunit epsilon, ATP5PF/subunit F6, ATP5PB/subunit b, ATP5PD/subunit d, ATP5PO/subunit OSCP. ATP synthase complex consists of a soluble F(1) head domain (subunits alpha(3) and beta(3)) - the catalytic core - and a membrane F(0) domain - the membrane proton channel (subunits c, a, 8, e, f, g, k and j). These two domains are linked by a central stalk (subunits gamma, delta, and epsilon) rotating inside the F1 region and a stationary peripheral stalk (subunits F6, b, d, and OSCP). Interacts with TMEM70 (homooligomer form); this interaction facilitates the oligomer formation of subunit c/ATP5MC1 (c-ring) and the c-ring membrane insertion and also protects ATP5MC1 against intramitochondrial proteolysis. Trimethylated by ATPSCKMT at Lys-104. Methylation is required for proper incorporation of the C subunit into the ATP synthase complex and mitochondrial respiration.

The protein localises to the mitochondrion membrane. The catalysed reaction is H(+)(in) = H(+)(out). In terms of biological role, subunit c, of the mitochondrial membrane ATP synthase complex (F(1)F(0) ATP synthase or Complex V) that produces ATP from ADP in the presence of a proton gradient across the membrane which is generated by electron transport complexes of the respiratory chain. ATP synthase complex consist of a soluble F(1) head domain - the catalytic core - and a membrane F(1) domain - the membrane proton channel. These two domains are linked by a central stalk rotating inside the F(1) region and a stationary peripheral stalk. During catalysis, ATP synthesis in the catalytic domain of F(1) is coupled via a rotary mechanism of the central stalk subunits to proton translocation. With the subunit a (MT-ATP6), forms the proton-conducting channel in the F(0) domain, that contains two crucial half-channels (inlet and outlet) that facilitate proton movement from the mitochondrial intermembrane space (IMS) into the matrix. Protons are taken up via the inlet half-channel and released through the outlet half-channel, following a Grotthuss mechanism. This Sus scrofa (Pig) protein is ATP synthase F(0) complex subunit C1, mitochondrial.